The following is a 469-amino-acid chain: 3-isopropylmalate dehydratase large subunit (469 aa).

3 residues coordinate [4Fe-4S] cluster: C350, C410, and C413.

It belongs to the aconitase/IPM isomerase family. LeuC type 1 subfamily. In terms of assembly, heterodimer of LeuC and LeuD. Requires [4Fe-4S] cluster as cofactor.

It catalyses the reaction (2R,3S)-3-isopropylmalate = (2S)-2-isopropylmalate. Its pathway is amino-acid biosynthesis; L-leucine biosynthesis; L-leucine from 3-methyl-2-oxobutanoate: step 2/4. Functionally, catalyzes the isomerization between 2-isopropylmalate and 3-isopropylmalate, via the formation of 2-isopropylmaleate. The chain is 3-isopropylmalate dehydratase large subunit from Rhodopseudomonas palustris (strain ATCC BAA-98 / CGA009).